The sequence spans 415 residues: G2/mitotic-specific cyclin cig1 (415 aa).

Disordered regions lie at residues Pro-54–Glu-74 and Glu-86–His-118. Residues Ile-57 to Asp-71 show a composition bias toward low complexity. At Ser-96 the chain carries Phosphoserine.

The protein belongs to the cyclin family. Cyclin G subfamily.

Its function is as follows. Required for efficient passage of the G1/S transition. The sequence is that of G2/mitotic-specific cyclin cig1 (cig1) from Schizosaccharomyces pombe (strain 972 / ATCC 24843) (Fission yeast).